The following is a 145-amino-acid chain: 3-hydroxyacyl-[acyl-carrier-protein] dehydratase FabZ (145 aa).

The active site involves H48.

Belongs to the thioester dehydratase family. FabZ subfamily.

The protein resides in the cytoplasm. The catalysed reaction is a (3R)-hydroxyacyl-[ACP] = a (2E)-enoyl-[ACP] + H2O. Its function is as follows. Involved in unsaturated fatty acids biosynthesis. Catalyzes the dehydration of short chain beta-hydroxyacyl-ACPs and long chain saturated and unsaturated beta-hydroxyacyl-ACPs. The polypeptide is 3-hydroxyacyl-[acyl-carrier-protein] dehydratase FabZ (Geobacillus thermodenitrificans (strain NG80-2)).